The sequence spans 696 residues: SLIT and NTRK-like protein 1 (696 aa).

The signal sequence occupies residues 1 to 17; sequence MLLWILLLETSLCFAAG. Residues 18–57 enclose the LRRNT 1 domain; sequence NVTGDVCKEKICSCNEIEGDLHVDCEKKGFTSLQRFTAPT. Over 18 to 622 the chain is Extracellular; the sequence is NVTGDVCKEK…SRVSISVLVP (605 aa). LRR repeat units follow at residues 59–80, 83–104, 106–128, 131–152, 155–176, and 178–199; these read QFYHLFLHGNSLTRLFPNEFAN, NAVSLHMENNGLHEIVPGAFLG, QLVKRLHINNNKIKSFRKQTFLG, DLEYLQADFNLLRDIDPGAFQD, KLEVLILNDNLISTLPANVFQY, and PITHLDLRGNRLKTLPYEEVLE. In terms of domain architecture, LRRCT 1 spans 212-263; sequence NPWDCTCDLLSLKEWLENIPKNALIGRVVCEAPTRLQGKDLNETTEQDLCPL. The disordered stretch occupies residues 265 to 314; sequence NRVDSSLPAPPAQEETFAPGPLPTPFKTNGQEDHATPGSAPNGGTKIPGN. The LRRNT 2 domain occupies 332 to 373; that stretch reads NKPLANSLPCPGGCSCDHIPGSGLKMNCNNRNVSSLADLKPK. LRR repeat units follow at residues 376-397, 400-421, 424-445, 448-469, 472-493, and 495-516; these read NVQELFLRDNKIHSIRKSHFVD, NLILLDLGNNNIATVENNTFKN, DLRWLYMDSNYLDTLSREKFAG, NLEYLNVEYNAIQLILPGTFNA, KLRILILNNNLLRSLPVDVFAG, and SLSKLSLHNNYFMYLPVAGVLD. Residues 529 to 580 enclose the LRRCT 2 domain; sequence NPWECSCTIVPFKQWAERLGSEVLMSDLKCETPVNFFRKDFMLLSNDEICPQ. The chain crosses the membrane as a helical span at residues 623 to 643; it reads GLLLVFVTSAFTVVGMLVFIL. Over 644–696 the chain is Cytoplasmic; the sequence is RNRKRSKRRDANSSASEINSLQTVCDSSYWHNGPYNADGAHRVYDCGSHSLSD. S695 carries the post-translational modification Phosphoserine; by CK2.

This sequence belongs to the SLITRK family. Can form homodimers; homodimerization requires repeat LRR 2. Interacts with YWHAB, YWHAE, YWHAG, YWHAH, SFN, YWHAQ and YWHAZ. In terms of processing, undergoes proteolytic cleavage that results in shedding of the ectodomain and cleavage of the C-terminal cytoplasmic tail. Glycosylated. Phosphorylation at Ser-695 is necessary for proper function in promoting neurite outgrowth. Expressed predominantly in the frontal lobe of the cerebral cortex of the brain. Also expressed in some astrocytic brain tumors such as astrocytomas, oligodendrogliomas, glioblastomas, gangliogliomas and primitive neuroectodermal tumors.

Its subcellular location is the membrane. The protein localises to the secreted. The protein resides in the synapse. In terms of biological role, it is involved in synaptogenesis and promotes excitatory synapse differentiation. Enhances neuronal dendrite outgrowth. The protein is SLIT and NTRK-like protein 1 (SLITRK1) of Homo sapiens (Human).